A 1193-amino-acid polypeptide reads, in one-letter code: Pyruvate carboxylase (1193 aa).

Residues 41-493 form the Biotin carboxylation domain; that stretch reads QFQKILVANR…WTTFIDDTPE (453 aa). 3 residues coordinate ATP: K159, E243, and H278. In terms of domain architecture, ATP-grasp spans 163-360; the sequence is RQLAIRCNVP…IVAAQIQIAA (198 aa). R335 is an active-site residue. The Pyruvate carboxyltransferase domain maps to 579 to 847; the sequence is CLIMDTTWRD…DPGLNSAHVR (269 aa). Substrate-binding positions include 587 to 591 and R660; that span reads RDAHQ. An a divalent metal cation-binding site is contributed by D588. The a divalent metal cation site is built by K756, H786, and H788. Position 756 is an N6-carboxylysine (K756). Substrate is bound at residue T921. Residues 1116–1191 enclose the Biotinyl-binding domain; that stretch reads KADVGDSSQV…DGQDLVCKIT (76 aa). K1157 bears the N6-biotinyllysine mark.

Requires biotin as cofactor. Zn(2+) is required as a cofactor.

It localises to the cytoplasm. The catalysed reaction is hydrogencarbonate + pyruvate + ATP = oxaloacetate + ADP + phosphate + H(+). It functions in the pathway carbohydrate biosynthesis; gluconeogenesis. Its function is as follows. Pyruvate carboxylase catalyzes a 2-step reaction, involving the ATP-dependent carboxylation of the covalently attached biotin in the first step and the transfer of the carboxyl group to pyruvate in the second. This chain is Pyruvate carboxylase (pyc), found in Aspergillus terreus.